We begin with the raw amino-acid sequence, 335 residues long: Tetraacyldisaccharide 4'-kinase (335 aa).

Position 58-65 (58-65 (VVGGSGKT)) interacts with ATP.

The protein belongs to the LpxK family.

It catalyses the reaction a lipid A disaccharide + ATP = a lipid IVA + ADP + H(+). The protein operates within glycolipid biosynthesis; lipid IV(A) biosynthesis; lipid IV(A) from (3R)-3-hydroxytetradecanoyl-[acyl-carrier-protein] and UDP-N-acetyl-alpha-D-glucosamine: step 6/6. In terms of biological role, transfers the gamma-phosphate of ATP to the 4'-position of a tetraacyldisaccharide 1-phosphate intermediate (termed DS-1-P) to form tetraacyldisaccharide 1,4'-bis-phosphate (lipid IVA). This chain is Tetraacyldisaccharide 4'-kinase, found in Hydrogenovibrio crunogenus (strain DSM 25203 / XCL-2) (Thiomicrospira crunogena).